Consider the following 475-residue polypeptide: tRNA modification GTPase MnmE (475 aa).

Arg32, Glu97, and Lys136 together coordinate (6S)-5-formyl-5,6,7,8-tetrahydrofolate. The TrmE-type G domain occupies 232–396 (GVATVIAGRP…LKSRMSSMVE (165 aa)). GTP-binding positions include 242 to 247 (NAGKST), 261 to 267 (SHMPGTT), 286 to 289 (DTAG), and 377 to 379 (SAR). Positions 246 and 267 each coordinate Mg(2+). Lys475 is a binding site for (6S)-5-formyl-5,6,7,8-tetrahydrofolate.

Belongs to the TRAFAC class TrmE-Era-EngA-EngB-Septin-like GTPase superfamily. TrmE GTPase family. Homodimer. Heterotetramer of two MnmE and two MnmG subunits. Requires K(+) as cofactor.

It is found in the cytoplasm. Functionally, exhibits a very high intrinsic GTPase hydrolysis rate. Involved in the addition of a carboxymethylaminomethyl (cmnm) group at the wobble position (U34) of certain tRNAs, forming tRNA-cmnm(5)s(2)U34. In Chlorobium phaeobacteroides (strain DSM 266 / SMG 266 / 2430), this protein is tRNA modification GTPase MnmE.